Reading from the N-terminus, the 257-residue chain is Phosphate import ATP-binding protein PstB (257 aa).

Positions 5–246 (LEIKDLTAFY…EVIFTSPKNE (242 aa)) constitute an ABC transporter domain. ATP is bound at residue 37 to 44 (GPSGCGKS).

It belongs to the ABC transporter superfamily. Phosphate importer (TC 3.A.1.7) family. In terms of assembly, the complex is composed of two ATP-binding proteins (PstB), two transmembrane proteins (PstC and PstA) and a solute-binding protein (PstS).

The protein resides in the cell membrane. It catalyses the reaction phosphate(out) + ATP + H2O = ADP + 2 phosphate(in) + H(+). Its function is as follows. Part of the ABC transporter complex PstSACB involved in phosphate import. Responsible for energy coupling to the transport system. This Tropheryma whipplei (strain TW08/27) (Whipple's bacillus) protein is Phosphate import ATP-binding protein PstB.